The chain runs to 384 residues: Mannitol-1-phosphate 5-dehydrogenase (384 aa).

NAD(+) is bound at residue 5-16 (AVHFGAGNIGRG).

This sequence belongs to the mannitol dehydrogenase family.

The enzyme catalyses D-mannitol 1-phosphate + NAD(+) = beta-D-fructose 6-phosphate + NADH + H(+). The protein is Mannitol-1-phosphate 5-dehydrogenase of Vibrio cholerae serotype O1 (strain ATCC 39541 / Classical Ogawa 395 / O395).